The primary structure comprises 529 residues: DEP domain-containing protein 1B (529 aa).

A DEP domain is found at 24–108 (FRAKMPLRKH…DNRHLYRFPP (85 aa)). S160 carries the phosphoserine modification. The Rho-GAP domain maps to 201–393 (DSLEEVLDVK…FLMDNYQEIL (193 aa)). Phosphoserine is present on S436.

The sequence is that of DEP domain-containing protein 1B (DEPDC1B) from Homo sapiens (Human).